Consider the following 239-residue polypeptide: tRNA (guanine-N(1)-)-methyltransferase (239 aa).

Residues Gly-108 and 127–132 (LGDYVL) contribute to the S-adenosyl-L-methionine site.

Belongs to the RNA methyltransferase TrmD family. Homodimer.

The protein localises to the cytoplasm. It catalyses the reaction guanosine(37) in tRNA + S-adenosyl-L-methionine = N(1)-methylguanosine(37) in tRNA + S-adenosyl-L-homocysteine + H(+). In terms of biological role, specifically methylates guanosine-37 in various tRNAs. The protein is tRNA (guanine-N(1)-)-methyltransferase of Streptococcus pneumoniae serotype 19F (strain G54).